Consider the following 1032-residue polypeptide: Vacuolar membrane protease (1032 aa).

Residues 1–11 are Cytoplasmic-facing; that stretch reads MKLGNPFVFRP. Residues 12–32 form a helical membrane-spanning segment; the sequence is GPVSFWTTIVYLAIIIPLIYV. At 33 to 415 the chain is on the vacuolar side; sequence QETVPPAPSE…SAFALRGLFA (383 aa). N-linked (GlcNAc...) asparagine glycosylation is found at Asn-50, Asn-138, and Asn-147. Zn(2+) is bound by residues His-194 and Asp-206. The active-site Proton acceptor is the Glu-240. 3 residues coordinate Zn(2+): Glu-241, Glu-266, and His-339. Residues 416–436 traverse the membrane as a helical segment; that stretch reads WTLTLLITTPLVLFVVTYLLV. Topologically, residues 437–469 are cytoplasmic; sequence RDDKWYFFATKVDSTVGDGEETVSFGGWKGFVR. Residues 470–490 form a helical membrane-spanning segment; it reads FPFALVVATALTIGSVFLLAK. Topologically, residues 491–493 are vacuolar; that stretch reads VNP. The chain crosses the membrane as a helical span at residues 494 to 514; it reads LIIYSSGYSVWAMMISLFYFV. Topologically, residues 515–532 are cytoplasmic; it reads SWLLLRGAHFVRPSALQR. A helical transmembrane segment spans residues 533-553; that stretch reads GFTLIWLFIITWVLSVFAAVA. The Vacuolar segment spans residues 554–560; that stretch reads EDRMNMG. The chain crosses the membrane as a helical span at residues 561–581; it reads AVYPLAFLHTFAFAAVLISLL. The Cytoplasmic segment spans residues 582–701; sequence EQYALPAKQD…WSGRLPTWTW (120 aa). The tract at residues 595–688 is disordered; it reads QVSGENEEEE…RKRSFPPYEN (94 aa). Residues 599–608 are compositionally biased toward acidic residues; it reads ENEEEEEQEQ. Positions 651–660 are enriched in polar residues; the sequence is SSEQTTTFAN. Residues 702–722 traverse the membrane as a helical segment; that stretch reads FIQLLLLVPLYVTVLGNLALV. The Vacuolar portion of the chain corresponds to 723 to 738; it reads QTTSIGKTGTDGSSLL. Residues 739 to 759 traverse the membrane as a helical segment; that stretch reads APLMGVGILAILLLLPLTPFI. At 760 to 766 the chain is on the cytoplasmic side; the sequence is HRVSHHV. The chain crosses the membrane as a helical span at residues 767-787; it reads PLFLFLVFIGTLIYNLTAFPF. The Vacuolar segment spans residues 788–1032; that stretch reads SDNNRFKFYF…VEITKKIKVA (245 aa). Residue Asn-940 is glycosylated (N-linked (GlcNAc...) asparagine).

It belongs to the peptidase M28 family. Requires Zn(2+) as cofactor.

The protein localises to the vacuole membrane. Its function is as follows. May be involved in vacuolar sorting and osmoregulation. The sequence is that of Vacuolar membrane protease from Metarhizium robertsii (strain ARSEF 23 / ATCC MYA-3075) (Metarhizium anisopliae (strain ARSEF 23)).